The chain runs to 134 residues: Ribosome-binding factor A (134 aa).

This sequence belongs to the RbfA family. In terms of assembly, monomer. Binds 30S ribosomal subunits, but not 50S ribosomal subunits or 70S ribosomes.

The protein localises to the cytoplasm. Its function is as follows. One of several proteins that assist in the late maturation steps of the functional core of the 30S ribosomal subunit. Associates with free 30S ribosomal subunits (but not with 30S subunits that are part of 70S ribosomes or polysomes). Required for efficient processing of 16S rRNA. May interact with the 5'-terminal helix region of 16S rRNA. This is Ribosome-binding factor A from Baumannia cicadellinicola subsp. Homalodisca coagulata.